Consider the following 116-residue polypeptide: Somatostatin (116 aa).

Positions 1–24 are cleaved as a signal peptide; that stretch reads MLSCRLQCALAALSIVLALGGVTG. Residues 25-88 constitute a propeptide that is removed on maturation; that stretch reads APSDPRLRQF…QDEMRLELQR (64 aa). Residue alanine 43 is modified to Alanine amide. A disordered region spans residues 62–99; sequence QTENDALEPEDLSQAAEQDEMRLELQRSANSNPAMAPR. Cysteine 105 and cysteine 116 are disulfide-bonded.

It belongs to the somatostatin family. C-terminal amidation of the neuronostatin peptide is required for its biological activity, including for the regulation of mean arterial pressure. Expressed in the pancreas and the spleen (at protein level).

The protein localises to the secreted. Inhibits the secretion of pituitary hormones, including that of growth hormone/somatotropin (GH1), PRL, ACTH, luteinizing hormone (LH) and TSH. Also impairs ghrelin- and GnRH-stimulated secretion of GH1 and LH; the inhibition of ghrelin-stimulated secretion of GH1 can be further increased by neuronostatin. In terms of biological role, may enhance low-glucose-induced glucagon release by pancreatic alpha cells. This effect may be mediated by binding to GPR107 and PKA activation. May regulate cardiac contractile function. May compromise cardiomyocyte viability. In the central nervous system, may impair memory retention and may affect hippocampal excitability. May also have anxiolytic and anorexigenic effects. May play a role in arterial pressure regulation. May inhibit basal, but not ghrelin- or GnRH-stimulated secretion of GH1 or LH, but does not affect the release of other pituitary hormones, including PRL, ACTH, FSH or TSH. Potentiates inhibitory action of somatostatin on ghrelin-stimulated secretion of GH1, but not that on GnRH-stimulated secretion of LH. The chain is Somatostatin (SST) from Sus scrofa (Pig).